A 148-amino-acid chain; its full sequence is Photosystem I reaction center subunit XI (148 aa).

Helical transmembrane passes span 48 to 68 (LEIG…LGPL), 73 to 93 (IGLL…TLGL), and 122 to 142 (GGFF…LSSI).

The protein belongs to the PsaL family.

The protein localises to the plastid. The protein resides in the chloroplast thylakoid membrane. In Thalassiosira pseudonana (Marine diatom), this protein is Photosystem I reaction center subunit XI.